Reading from the N-terminus, the 269-residue chain is MGQNDIMSTAEDFADQFLRVTKQYLPHVARLCLISTFLEDGIRMWFQWSEQRDYIDGTWNCGYFLASIFVFINLFGQLSGCILVLSRNFVQYACFGLFGIIALQTIAYSILWDLKFLMRNLALGGGLLLLLAESRSEGKSMFAGVPTMRESSPKQYMQLGGRVLLVLMFMTLLHFDMNFFYILQNIVGTALIILVAIGFKTKLAALTLVIWLFGINIYFNAFWTIPAYKPMHDFLKYDFFQTMSVIGGLLLVVALGPGGVSMDEKKKEW.

6 helical membrane-spanning segments follow: residues 64-84 (FLAS…CILV), 92-112 (YACF…SILW), 157-177 (MQLG…HFDM), 179-199 (FFYI…AIGF), 203-223 (LAAL…NAFW), and 242-262 (TMSV…GVSM). The Di-lysine motif motif lies at 266–269 (KKEW).

The protein belongs to the SURF4 family.

The protein localises to the endoplasmic reticulum membrane. Its subcellular location is the endoplasmic reticulum-Golgi intermediate compartment membrane. It is found in the golgi apparatus membrane. Endoplasmic reticulum cargo receptor that mediates the export of lipoproteins by recruiting cargos into COPII vesicles to facilitate their secretion. Acts as a cargo receptor for lipoproteins bearing both APOB and APOA1, thereby regulating lipoprotein delivery and the maintenance of lipid homeostasis. The chain is Surfeit locus protein 4 from Gallus gallus (Chicken).